The sequence spans 279 residues: Urease accessory protein UreD (279 aa).

This sequence belongs to the UreD family. As to quaternary structure, ureD, UreF and UreG form a complex that acts as a GTP-hydrolysis-dependent molecular chaperone, activating the urease apoprotein by helping to assemble the nickel containing metallocenter of UreC. The UreE protein probably delivers the nickel.

The protein localises to the cytoplasm. Its function is as follows. Required for maturation of urease via the functional incorporation of the urease nickel metallocenter. This Rhodopseudomonas palustris (strain HaA2) protein is Urease accessory protein UreD.